The chain runs to 197 residues: MYB-like transcription factor EOBII (197 aa).

HTH myb-type domains are found at residues 10 to 62 and 63 to 117; these read DAEV…LNYL and RPDV…QKHI. DNA-binding regions (H-T-H motif) lie at residues 38–62 and 90–113; these read WNSL…LNYL and WSKI…RTRI. Positions 125–158 are disordered; sequence GQAASSEQNDHQEACTSQMSNGPNDNTIDQTYSP. The segment covering 138 to 158 has biased composition (polar residues); it reads ACTSQMSNGPNDNTIDQTYSP.

In terms of tissue distribution, specifically expressed in flowers, mostly in stigmas, petal tubes and petal limbs, and, to a lower extent, in anthers and stamen. Also present at low levels in roots, stems, leaves and sepals.

Its subcellular location is the nucleus. In terms of biological role, MYB-type transcription factor controlling the production of volatile organic compounds (VOCs), including floral volatile benzenoids and phenylpropanoids (FVBP), in flowers of fragrant cultivars (e.g. cv. Mitchell and cv. V26) by regulating the expression of ODO1 and EOBI, key regulators of the shikimate pathway, and of several biosynthetic floral scent-related genes including IGS, PAL2 and CFAT. This scent, mostly produced in the evening and night by the petals, attracts the pollinators (e.g. the night-active hawkmoth pollinator Manduca sexta). Binds to and activates the ODO1 and EOBI promoters via MYB binding sites (MBS) 5'-AAACCTAAT-3' and 5'-CTAACT-3'. Regulates the promoters of IGS1, CFAT and PAL2. Controls flowers petal opening by modulating a global transcriptomic switch. The polypeptide is MYB-like transcription factor EOBII (Petunia hybrida (Petunia)).